We begin with the raw amino-acid sequence, 397 residues long: MAKKTIDQIDVQDKTVLMRVDFNVPLDESLAITDDRRIRMALPSIKSVIDRGGKVILMSHLGRPTGGEGDEKYSLAPAAKRLGELLGSTVHFATDTVGDDASSKASSLAAGEVLVLENLRFNPGEKKGDSEFAGKLAAMADAYCNDAFGTCHRKDASMVAVPEAMAGKPRVVGHLVAKEIQYLTDAISKPERPFVAILGGAKVSDKINVINNLLGICDAVLIGGAMAYTFSLASGGKVGKSLVEKDKVELAKELMAKGGDKLQLPVDTHCGDDFGNIAGCNKKVVAAGEIPDDMEGLDIGPETAKKYAEVIKSAKTIVWNGPMGVFEKPPMDEGTKAVAQAIADGDAVSIIGGGDSAAAVDQLGFADDVSHVSTGGGASLAMLEGQAFAAVDLLDEA.

Residues 21 to 23 (DFN), arginine 37, 60 to 63 (HLGR), arginine 120, and arginine 153 contribute to the substrate site. Residues lysine 206, glycine 296, glutamate 327, and 353–356 (GGDS) contribute to the ATP site.

The protein belongs to the phosphoglycerate kinase family. In terms of assembly, monomer.

The protein localises to the cytoplasm. The catalysed reaction is (2R)-3-phosphoglycerate + ATP = (2R)-3-phospho-glyceroyl phosphate + ADP. The protein operates within carbohydrate degradation; glycolysis; pyruvate from D-glyceraldehyde 3-phosphate: step 2/5. The sequence is that of Phosphoglycerate kinase from Rhodopirellula baltica (strain DSM 10527 / NCIMB 13988 / SH1).